The primary structure comprises 291 residues: Beta-lactamase CTX-M-25 (291 aa).

A signal peptide spans 1–30 (MMRKSVRRAMLMTTACVSLLLASVPLCAQA). Ser-73 serves as the catalytic Nucleophile; acyl-ester intermediate. A beta-lactam contacts are provided by Lys-76, Ser-133, Glu-169, and Ser-240.

This sequence belongs to the class-A beta-lactamase family. In terms of assembly, monomer.

The protein resides in the secreted. The enzyme catalyses a beta-lactam + H2O = a substituted beta-amino acid. Inhibited by the beta-lactamase-blocking agents clavulanic acid and tazobactam; in the DH10B strain. Extended-spectrum beta-lactamase (ESBL) which confers resistance to penicillins, as well as first, second and third-generation cephalosporins. Has cefotaxime-hydrolyzing activity. Inactive against cephalosporin antibiotic, cefoxitin, and the carbapenem, imipenem. This chain is Beta-lactamase CTX-M-25, found in Escherichia coli.